Here is a 236-residue protein sequence, read N- to C-terminus: Ubiquinone biosynthesis O-methyltransferase (236 aa).

S-adenosyl-L-methionine is bound by residues Arg39, Gly59, Asp80, and Met124.

It belongs to the methyltransferase superfamily. UbiG/COQ3 family.

It catalyses the reaction a 3-demethylubiquinol + S-adenosyl-L-methionine = a ubiquinol + S-adenosyl-L-homocysteine + H(+). It carries out the reaction a 3-(all-trans-polyprenyl)benzene-1,2-diol + S-adenosyl-L-methionine = a 2-methoxy-6-(all-trans-polyprenyl)phenol + S-adenosyl-L-homocysteine + H(+). It functions in the pathway cofactor biosynthesis; ubiquinone biosynthesis. Its function is as follows. O-methyltransferase that catalyzes the 2 O-methylation steps in the ubiquinone biosynthetic pathway. This chain is Ubiquinone biosynthesis O-methyltransferase, found in Shewanella baltica (strain OS223).